Here is a 180-residue protein sequence, read N- to C-terminus: MTEELKLMGANRRDQLLLWLKESKSPLTGGELAKKANVSRQVIVQDISLLKAKNVPIIATSQGYVYMDAAAQQHQQAERIIACLHGPERTEEELQLIVDEGVTVKDVKIEHPVYGDLTAAIQVGTRKEVSHFIKKINSTNAAYLSQLTDGVHLHTLTAPDEHRIDQACQALEEAGILIKD.

Homodimer.

Its function is as follows. In the presence of nicotinic acid represses transcription of the nadBCA and nifS-nadR operons. Also binds to DNA upstream of the niaP gene, probably regulating it as well. May bind nicotinic acid. This is Transcription repressor NadR (nadR) from Bacillus subtilis (strain 168).